Reading from the N-terminus, the 965-residue chain is 26S proteasome non-ATPase regulatory subunit 1 (965 aa).

8 PC repeats span residues 380 to 413 (NAVASLGLIHHGQESSAMKVLEPYLPKESVEGFG), 418 to 452 (GAMLAYGLIHAKHGDATAMSTLAQWLKTAENEPVR), 454 to 488 (GACLGFGVAGLGSSSVSNYEKVREVLQRDEAVSGE), 489 to 523 (SAGIAMGLIMAGHLNQEVFNELKQYTVDTQHDKTQ), 560 to 595 (TGICMLSMAYAGTGSPDVVRRLLEKVATDPNLDVKR), 630 to 664 (GAAMALGIACAGTGNMEAIALIEPMISDKEGFVRK), 665 to 706 (GALL…SLVK), and 708 to 738 (GAIIAQGLLDIGGQNAAVTMQNSDKQPDMGS). A compositionally biased stretch (low complexity) spans 836–856 (ASASSAAAAPSSSSTSGTAPA). 2 disordered regions span residues 836 to 889 (ASAS…LQNP) and 943 to 965 (TPASSGNTENKPHSTFEININDF). Positions 863-882 (EVDQPGKSKKEKAPEKDTKP) are enriched in basic and acidic residues.

The protein belongs to the proteasome subunit S1 family.

Functionally, acts as a regulatory subunit of the 26 proteasome which is involved in the ATP-dependent degradation of ubiquitinated proteins. The sequence is that of 26S proteasome non-ATPase regulatory subunit 1 (rpn-2) from Caenorhabditis elegans.